A 23-amino-acid polypeptide reads, in one-letter code: Apolipophorin-1 (23 aa).

Positions 1-15 (SVKSEVDNFDKHLKA) are enriched in basic and acidic residues. The segment at 1–23 (SVKSEVDNFDKHLKAESAPFNNE) is disordered.

Expressed in hemolymph.

It localises to the secreted. Functionally, constitutes the major component of lipophorin, which mediates transport for various types of lipids in hemolymph. Acts by forming lipoprotein particles that bind lipoproteins and lipids. The chain is Apolipophorin-1 from Galleria mellonella (Greater wax moth).